The primary structure comprises 334 residues: MTASTDRYAASLRLSVAPMMDWTDRHCRVFHRLLAPSARLYTEMVHANAVIHGDRARLIGFDPVEHPLALQLGGSDPALLAQAAAIAQEWGFDEINLNCGCPSDRVQAGRFGACLMREPALVAECVAAMCAATHLPITVKCRLGVDDDDDYALFARFVDQVVAAGAAMVVVHARNAWLKGLSPKENREVPPLRYDWAYRLKQERPGLPVVLNGGIVAVEPAIAHLQHADGVMLGRAAYHDPYVLHCLDAALNQRPEQPRESLLRAYQPYVESQLAQGLGLKHMTRHVLGLFHGQPGGRAFRQVLSEGAHRPGAGWELVEQALERTDTRSWRVVA.

FMN contacts are provided by residues 18–20 (PMM) and Gln-71. Residue Cys-101 is the Proton donor of the active site. FMN is bound by residues Lys-140, His-172, 212–214 (NGG), and 234–235 (GR).

Belongs to the Dus family. DusA subfamily. The cofactor is FMN.

The enzyme catalyses 5,6-dihydrouridine(20) in tRNA + NADP(+) = uridine(20) in tRNA + NADPH + H(+). It carries out the reaction 5,6-dihydrouridine(20) in tRNA + NAD(+) = uridine(20) in tRNA + NADH + H(+). The catalysed reaction is 5,6-dihydrouridine(20a) in tRNA + NADP(+) = uridine(20a) in tRNA + NADPH + H(+). It catalyses the reaction 5,6-dihydrouridine(20a) in tRNA + NAD(+) = uridine(20a) in tRNA + NADH + H(+). In terms of biological role, catalyzes the synthesis of 5,6-dihydrouridine (D), a modified base found in the D-loop of most tRNAs, via the reduction of the C5-C6 double bond in target uridines. Specifically modifies U20 and U20a in tRNAs. This chain is tRNA-dihydrouridine(20/20a) synthase, found in Xanthomonas axonopodis pv. citri (strain 306).